A 308-amino-acid polypeptide reads, in one-letter code: Aspartate carbamoyltransferase catalytic subunit (308 aa).

Positions 59 and 60 each coordinate carbamoyl phosphate. An L-aspartate-binding site is contributed by Lys-87. Carbamoyl phosphate contacts are provided by Arg-109, His-139, and Gln-142. L-aspartate-binding residues include Arg-172 and Arg-224. Carbamoyl phosphate-binding residues include Ala-265 and Pro-266.

This sequence belongs to the aspartate/ornithine carbamoyltransferase superfamily. ATCase family. Heterododecamer (2C3:3R2) of six catalytic PyrB chains organized as two trimers (C3), and six regulatory PyrI chains organized as three dimers (R2).

The enzyme catalyses carbamoyl phosphate + L-aspartate = N-carbamoyl-L-aspartate + phosphate + H(+). It participates in pyrimidine metabolism; UMP biosynthesis via de novo pathway; (S)-dihydroorotate from bicarbonate: step 2/3. Catalyzes the condensation of carbamoyl phosphate and aspartate to form carbamoyl aspartate and inorganic phosphate, the committed step in the de novo pyrimidine nucleotide biosynthesis pathway. The polypeptide is Aspartate carbamoyltransferase catalytic subunit (Streptococcus thermophilus (strain ATCC BAA-491 / LMD-9)).